The chain runs to 298 residues: Tyrosine recombinase XerC (298 aa).

In terms of domain architecture, Core-binding (CB) spans 1 to 84 (MNHIQEAFLN…TLRTFYEYWM (84 aa)). Residues 105–286 (YLPQFFYEEE…SNQQLRKVYL (182 aa)) enclose the Tyr recombinase domain. Active-site residues include R145, K169, H238, R241, and H264. Y273 serves as the catalytic O-(3'-phospho-DNA)-tyrosine intermediate.

It belongs to the 'phage' integrase family. XerC subfamily. Forms a cyclic heterotetrameric complex composed of two molecules of XerC and two molecules of XerD.

It is found in the cytoplasm. Site-specific tyrosine recombinase, which acts by catalyzing the cutting and rejoining of the recombining DNA molecules. The XerC-XerD complex is essential to convert dimers of the bacterial chromosome into monomers to permit their segregation at cell division. It also contributes to the segregational stability of plasmids. The polypeptide is Tyrosine recombinase XerC (Staphylococcus aureus (strain bovine RF122 / ET3-1)).